The following is a 475-amino-acid chain: GTPase Der (475 aa).

2 consecutive EngA-type G domains span residues 3–167 (LTIA…GGER) and 205–380 (LRIA…RVWN). GTP contacts are provided by residues 9 to 16 (GRPNVGKS), 56 to 60 (DTAGL), 119 to 122 (NKSE), 211 to 218 (GRPNTGKS), 258 to 262 (DTAGL), and 323 to 326 (NKWD). The KH-like domain occupies 381 to 465 (RRISTGKLNR…PIRISLRASD (85 aa)).

The protein belongs to the TRAFAC class TrmE-Era-EngA-EngB-Septin-like GTPase superfamily. EngA (Der) GTPase family. In terms of assembly, associates with the 50S ribosomal subunit.

GTPase that plays an essential role in the late steps of ribosome biogenesis. The sequence is that of GTPase Der from Bartonella henselae (strain ATCC 49882 / DSM 28221 / CCUG 30454 / Houston 1) (Rochalimaea henselae).